Reading from the N-terminus, the 910-residue chain is Valine--tRNA ligase (910 aa).

The short motif at 46–56 (PNVTGSLHMGH) is the 'HIGH' region element. The short motif at 539 to 543 (KMSKS) is the 'KMSKS' region element. Lysine 542 lines the ATP pocket. Residues 845 to 909 (DLDILRNKIQ…QMLQERLKML (65 aa)) are a coiled coil.

It belongs to the class-I aminoacyl-tRNA synthetase family. ValS type 1 subfamily. Monomer.

The protein resides in the cytoplasm. The enzyme catalyses tRNA(Val) + L-valine + ATP = L-valyl-tRNA(Val) + AMP + diphosphate. Functionally, catalyzes the attachment of valine to tRNA(Val). As ValRS can inadvertently accommodate and process structurally similar amino acids such as threonine, to avoid such errors, it has a 'posttransfer' editing activity that hydrolyzes mischarged Thr-tRNA(Val) in a tRNA-dependent manner. This Synechocystis sp. (strain ATCC 27184 / PCC 6803 / Kazusa) protein is Valine--tRNA ligase.